The chain runs to 196 residues: GTP cyclohydrolase 1 (196 aa).

Zn(2+)-binding residues include Cys84, His87, and Cys157.

It belongs to the GTP cyclohydrolase I family. Toroid-shaped homodecamer, composed of two pentamers of five dimers.

The catalysed reaction is GTP + H2O = 7,8-dihydroneopterin 3'-triphosphate + formate + H(+). The protein operates within cofactor biosynthesis; 7,8-dihydroneopterin triphosphate biosynthesis; 7,8-dihydroneopterin triphosphate from GTP: step 1/1. This chain is GTP cyclohydrolase 1, found in Corynebacterium glutamicum (strain R).